The primary structure comprises 50 residues: Major pollen allergen Ole e 6 (50 aa).

3 disulfides stabilise this stretch: C8–C34, C12–C30, and C16–C26.

Expressed in pollen.

This is Major pollen allergen Ole e 6 (OLE6) from Olea europaea (Common olive).